A 205-amino-acid chain; its full sequence is Sarcosine oxidase subunit gamma (205 aa).

The protein belongs to the SoxG family. Heterotetramer composed of subunits alpha (SoxA), beta (SoxB), gamma (SoxG) and delta (SoxD).

The protein resides in the cytoplasm. It catalyses the reaction sarcosine + (6S)-5,6,7,8-tetrahydrofolate + O2 = (6R)-5,10-methylene-5,6,7,8-tetrahydrofolate + glycine + H2O2. The enzyme catalyses sarcosine + O2 + H2O = formaldehyde + glycine + H2O2. Its activity is regulated as follows. Inhibited by Zn(2+), Cu(2+), Cd(2+), Hg(2+), Ag(+), p-chloromercuribenzoate (p-CMB), iodoacetamide, N-ethylmaleimide, CN(-), o-phenanthroline and sodium lauryl sulfate. Its function is as follows. In the presence of tetrahydrofolate, catalyzes the oxidative demethylation of sarcosine to yield glycine, 5,10-methylenetetrahydrofolate and hydrogen peroxide. In the absence of tetrahydrofolate, catalyzes the oxidative demethylation of sarcosine to yield glycine, formaldehyde and hydrogen peroxide. Can also use N-methyl-L-alanine and N-ethyl-L-glycine. Is very specific for oxygen as an acceptor. The chain is Sarcosine oxidase subunit gamma from Corynebacterium sp. (strain U-96).